The following is a 495-amino-acid chain: N-succinylglutamate 5-semialdehyde dehydrogenase (495 aa).

NAD(+) is bound at residue 220-225 (GSAGTG). Residues E243 and C277 contribute to the active site.

The protein belongs to the aldehyde dehydrogenase family. AstD subfamily.

It catalyses the reaction N-succinyl-L-glutamate 5-semialdehyde + NAD(+) + H2O = N-succinyl-L-glutamate + NADH + 2 H(+). It functions in the pathway amino-acid degradation; L-arginine degradation via AST pathway; L-glutamate and succinate from L-arginine: step 4/5. Functionally, catalyzes the NAD-dependent reduction of succinylglutamate semialdehyde into succinylglutamate. This chain is N-succinylglutamate 5-semialdehyde dehydrogenase, found in Enterobacter sp. (strain 638).